The primary structure comprises 214 residues: Large ribosomal subunit protein uL3 (214 aa).

Residues 130 to 151 (FSSNRASHGNSRSHNTPGSIGQ) show a composition bias toward polar residues. Residues 130-163 (FSSNRASHGNSRSHNTPGSIGQAQDPGRVFPGKR) are disordered. Position 153 is an N5-methylglutamine (Gln153).

Belongs to the universal ribosomal protein uL3 family. Part of the 50S ribosomal subunit. Forms a cluster with proteins L14 and L19. In terms of processing, methylated by PrmB.

One of the primary rRNA binding proteins, it binds directly near the 3'-end of the 23S rRNA, where it nucleates assembly of the 50S subunit. This is Large ribosomal subunit protein uL3 from Chromobacterium violaceum (strain ATCC 12472 / DSM 30191 / JCM 1249 / CCUG 213 / NBRC 12614 / NCIMB 9131 / NCTC 9757 / MK).